Here is a 333-residue protein sequence, read N- to C-terminus: Ornithine carbamoyltransferase (333 aa).

Residues 57-60 (STRT), arginine 108, and 135-138 (HPTQ) contribute to the carbamoyl phosphate site. Residues asparagine 168, aspartate 232, and 236-237 (SM) each bind L-ornithine. Carbamoyl phosphate is bound by residues 274-275 (CL) and arginine 319.

Belongs to the aspartate/ornithine carbamoyltransferase superfamily. OTCase family.

Its subcellular location is the cytoplasm. It carries out the reaction carbamoyl phosphate + L-ornithine = L-citrulline + phosphate + H(+). It participates in amino-acid degradation; L-arginine degradation via ADI pathway; carbamoyl phosphate from L-arginine: step 2/2. Reversibly catalyzes the transfer of the carbamoyl group from carbamoyl phosphate (CP) to the N(epsilon) atom of ornithine (ORN) to produce L-citrulline. The protein is Ornithine carbamoyltransferase of Pediococcus pentosaceus (strain ATCC 25745 / CCUG 21536 / LMG 10740 / 183-1w).